Here is a 757-residue protein sequence, read N- to C-terminus: LPS-assembly protein LptD (757 aa).

The first 20 residues, 1-20 (MLQRFITSLMLLPFPGSALA), serve as a signal peptide directing secretion.

Belongs to the LptD family. In terms of assembly, component of the lipopolysaccharide transport and assembly complex. Interacts with LptE and LptA.

It is found in the cell outer membrane. Its function is as follows. Together with LptE, is involved in the assembly of lipopolysaccharide (LPS) at the surface of the outer membrane. The polypeptide is LPS-assembly protein LptD (Idiomarina loihiensis (strain ATCC BAA-735 / DSM 15497 / L2-TR)).